Reading from the N-terminus, the 218-residue chain is Capsid protein (218 aa).

Residue Met-1 is modified to N-acetylmethionine; by host. The span at 1 to 10 (MDKSESTSAG) shows a compositional bias: low complexity. Positions 1 to 30 (MDKSESTSAGRNRRRRPRRGSRSASSSADA) are disordered. Residues 11–21 (RNRRRRPRRGS) show a composition bias toward basic residues.

Belongs to the cucumovirus capsid protein family.

It is found in the virion. Functionally, capsid protein. Probably binds RNA and plays a role in packaging. The polypeptide is Capsid protein (Cucumber mosaic virus (strain P6) (CMV)).